A 580-amino-acid chain; its full sequence is Type 3 secretion system translocon protein SctE (580 aa).

2 helical membrane-spanning segments follow: residues 313–333 (ILGALLTIVSVVAAAFSGGAS) and 399–419 (IGSILGAIAGALVLVAAVVLV).

It belongs to the SctE/SipB/YopB family. The core secretion machinery of the T3SS is composed of approximately 20 different proteins, including cytoplasmic components, a base, an export apparatus and a needle. This subunit is involved in the formation of a pore, called the translocon, in host membrane.

It localises to the secreted. The protein resides in the host membrane. In terms of biological role, component of the type III secretion system (T3SS), also called injectisome, which is used to inject bacterial effector proteins into eukaryotic host cells. IpaB/SctE and IpaC/SctB are inserted into the host membrane where they form a pore and allow the translocation of effector proteins into the cytosol of target cells. The chain is Type 3 secretion system translocon protein SctE from Shigella dysenteriae.